The primary structure comprises 62 residues: uncharacterized protein (62 aa).

This is an uncharacterized protein from Escherichia coli.